The chain runs to 24 residues: Humanin-like 11 (24 aa).

This sequence belongs to the humanin family.

Its subcellular location is the secreted. It localises to the cytoplasm. Functionally, plays a role as a neuroprotective and antiapoptotic factor. The polypeptide is Humanin-like 11 (Homo sapiens (Human)).